The primary structure comprises 411 residues: Translation initiation factor 2 subunit gamma (411 aa).

The 193-residue stretch at 9–201 (QPTVNIGMVG…AIEKYIPTPE (193 aa)) folds into the tr-type G domain. The tract at residues 18–25 (GHVDHGKS) is G1. 4 residues coordinate Mg(2+): aspartate 21, serine 25, glycine 46, and serine 48. 21 to 26 (DHGKST) lines the GTP pocket. The tract at residues 46–50 (GISIK) is G2. The tract at residues 88-91 (DAPG) is G3. GTP-binding positions include 144–147 (NKID) and 179–181 (SAY). Positions 144-147 (NKID) are G4. A G5 region spans residues 179–181 (SAY).

It belongs to the TRAFAC class translation factor GTPase superfamily. Classic translation factor GTPase family. EIF2G subfamily. In terms of assembly, heterotrimer composed of an alpha, a beta and a gamma chain. Mg(2+) is required as a cofactor.

It carries out the reaction GTP + H2O = GDP + phosphate + H(+). In terms of biological role, eIF-2 functions in the early steps of protein synthesis by forming a ternary complex with GTP and initiator tRNA. The protein is Translation initiation factor 2 subunit gamma of Thermoplasma volcanium (strain ATCC 51530 / DSM 4299 / JCM 9571 / NBRC 15438 / GSS1).